A 132-amino-acid chain; its full sequence is Small ribosomal subunit protein uS8 (132 aa).

The protein belongs to the universal ribosomal protein uS8 family. Part of the 30S ribosomal subunit. Contacts proteins S5 and S12.

Its function is as follows. One of the primary rRNA binding proteins, it binds directly to 16S rRNA central domain where it helps coordinate assembly of the platform of the 30S subunit. The sequence is that of Small ribosomal subunit protein uS8 from Corynebacterium kroppenstedtii (strain DSM 44385 / JCM 11950 / CIP 105744 / CCUG 35717).